Reading from the N-terminus, the 711-residue chain is Polyribonucleotide nucleotidyltransferase (711 aa).

2 residues coordinate Mg(2+): Asp-486 and Asp-492. Positions 553–612 (PRIHTIKISTDKIKDVIGKGGSVIRALTEETGTTIEIEDDGTVKIAATDGEKAKYAIRRI) constitute a KH domain. Positions 622–690 (GRIYNSKVTR…RQGRVRLSIK (69 aa)) constitute an S1 motif domain. The interval 689 to 711 (IKEATEQSQPAAAPEAPASEQAE) is disordered. A compositionally biased stretch (low complexity) spans 694-711 (EQSQPAAAPEAPASEQAE).

Belongs to the polyribonucleotide nucleotidyltransferase family. Component of the RNA degradosome, which is a multiprotein complex involved in RNA processing and mRNA degradation. Requires Mg(2+) as cofactor.

Its subcellular location is the cytoplasm. It catalyses the reaction RNA(n+1) + phosphate = RNA(n) + a ribonucleoside 5'-diphosphate. In terms of biological role, involved in mRNA degradation. Catalyzes the phosphorolysis of single-stranded polyribonucleotides processively in the 3'- to 5'-direction. This Salmonella typhi protein is Polyribonucleotide nucleotidyltransferase.